The chain runs to 84 residues: Large ribosomal subunit protein bL27 (84 aa).

Residues 1–21 (MAHKKGGGSSKNGRDSQSKRL) form a disordered region.

Belongs to the bacterial ribosomal protein bL27 family.

The chain is Large ribosomal subunit protein bL27 from Brachyspira hyodysenteriae (strain ATCC 49526 / WA1).